Here is a 56-residue protein sequence, read N- to C-terminus: Large ribosomal subunit protein bL33 (56 aa).

This sequence belongs to the bacterial ribosomal protein bL33 family.

This is Large ribosomal subunit protein bL33 from Halorhodospira halophila (strain DSM 244 / SL1) (Ectothiorhodospira halophila (strain DSM 244 / SL1)).